We begin with the raw amino-acid sequence, 357 residues long: Protein-glutamate methylesterase/protein-glutamine glutaminase (357 aa).

In terms of domain architecture, Response regulatory spans 3 to 120 (RVLVVDDSAF…SIDLYKVRDM (118 aa)). 4-aspartylphosphate is present on D54. Positions 161–355 (FRAGKQLICI…AAIMTYMKKE (195 aa)) constitute a CheB-type methylesterase domain. Residues S173, H200, and D296 contribute to the active site.

It belongs to the CheB family. Phosphorylated by CheA. Phosphorylation of the N-terminal regulatory domain activates the methylesterase activity.

It is found in the cytoplasm. It carries out the reaction [protein]-L-glutamate 5-O-methyl ester + H2O = L-glutamyl-[protein] + methanol + H(+). The catalysed reaction is L-glutaminyl-[protein] + H2O = L-glutamyl-[protein] + NH4(+). In terms of biological role, involved in chemotaxis. Part of a chemotaxis signal transduction system that modulates chemotaxis in response to various stimuli. Catalyzes the demethylation of specific methylglutamate residues introduced into the chemoreceptors (methyl-accepting chemotaxis proteins or MCP) by CheR. Also mediates the irreversible deamidation of specific glutamine residues to glutamic acid. This chain is Protein-glutamate methylesterase/protein-glutamine glutaminase, found in Bacillus licheniformis (strain ATCC 14580 / DSM 13 / JCM 2505 / CCUG 7422 / NBRC 12200 / NCIMB 9375 / NCTC 10341 / NRRL NRS-1264 / Gibson 46).